Reading from the N-terminus, the 109-residue chain is Thiosulfate sulfurtransferase GlpE (109 aa).

The region spanning R16–S104 is the Rhodanese domain. The Cysteine persulfide intermediate role is filled by C64.

The protein belongs to the GlpE family.

It localises to the cytoplasm. The enzyme catalyses thiosulfate + hydrogen cyanide = thiocyanate + sulfite + 2 H(+). It catalyses the reaction thiosulfate + [thioredoxin]-dithiol = [thioredoxin]-disulfide + hydrogen sulfide + sulfite + 2 H(+). In terms of biological role, transferase that catalyzes the transfer of sulfur from thiosulfate to thiophilic acceptors such as cyanide or dithiols. May function in a CysM-independent thiosulfate assimilation pathway by catalyzing the conversion of thiosulfate to sulfite, which can then be used for L-cysteine biosynthesis. The chain is Thiosulfate sulfurtransferase GlpE from Pseudomonas fluorescens (strain SBW25).